Here is a 312-residue protein sequence, read N- to C-terminus: L-lactate dehydrogenase (312 aa).

3 residues coordinate NAD(+): V14, D35, and Y66. Residues Q83, R90, and 122–125 each bind substrate; that span reads NPVD. NAD(+)-binding positions include 120 to 122 and S145; that span reads ASN. Residue 150–153 coordinates substrate; it reads DSAR. The active-site Proton acceptor is H177. Residue Y220 is modified to Phosphotyrosine. T229 contacts substrate.

It belongs to the LDH/MDH superfamily. LDH family. In terms of assembly, homotetramer.

The protein resides in the cytoplasm. The enzyme catalyses (S)-lactate + NAD(+) = pyruvate + NADH + H(+). The protein operates within fermentation; pyruvate fermentation to lactate; (S)-lactate from pyruvate: step 1/1. Its function is as follows. Catalyzes the conversion of lactate to pyruvate. The protein is L-lactate dehydrogenase of Mycoplasma pneumoniae (strain ATCC 29342 / M129 / Subtype 1) (Mycoplasmoides pneumoniae).